Consider the following 1594-residue polypeptide: Protein SHORTAGE IN CHIASMATA 1 (1594 aa).

5 disordered regions span residues 1148–1180 (DSRS…SKKK), 1239–1283 (APFK…QPDF), 1396–1426 (AADI…YADN), 1491–1523 (RSRA…NTKR), and 1536–1594 (GGNK…LVWK). Over residues 1151–1165 (SVMTDSSSSVSSGPD) the composition is skewed to low complexity. 2 stretches are compositionally biased toward basic and acidic residues: residues 1254–1265 (PSKDPERFDKKS) and 1402–1414 (SSER…DSKY). A compositionally biased stretch (polar residues) spans 1577 to 1594 (QSLSYTANGTGQTKLVWK).

This sequence belongs to the XPF family. Interacts with PTD. Highest levels in young buds, where male meiosis occurs. Also present at low levels in plantlets, leaves, flowers, and roots.

The protein resides in the nucleus. Functionally, essential for the formation of class I meiotic crossovers. The protein is Protein SHORTAGE IN CHIASMATA 1 of Arabidopsis thaliana (Mouse-ear cress).